We begin with the raw amino-acid sequence, 416 residues long: Serine hydroxymethyltransferase (416 aa).

(6S)-5,6,7,8-tetrahydrofolate contacts are provided by residues leucine 118 and 122-124; that span reads GHL. Position 226 is an N6-(pyridoxal phosphate)lysine (lysine 226). (6S)-5,6,7,8-tetrahydrofolate-binding positions include glutamate 242 and 350-352; that span reads SPF.

This sequence belongs to the SHMT family. Homodimer. It depends on pyridoxal 5'-phosphate as a cofactor.

Its subcellular location is the cytoplasm. It catalyses the reaction (6R)-5,10-methylene-5,6,7,8-tetrahydrofolate + glycine + H2O = (6S)-5,6,7,8-tetrahydrofolate + L-serine. It participates in one-carbon metabolism; tetrahydrofolate interconversion. It functions in the pathway amino-acid biosynthesis; glycine biosynthesis; glycine from L-serine: step 1/1. Catalyzes the reversible interconversion of serine and glycine with tetrahydrofolate (THF) serving as the one-carbon carrier. This reaction serves as the major source of one-carbon groups required for the biosynthesis of purines, thymidylate, methionine, and other important biomolecules. Also exhibits THF-independent aldolase activity toward beta-hydroxyamino acids, producing glycine and aldehydes, via a retro-aldol mechanism. The chain is Serine hydroxymethyltransferase from Helicobacter acinonychis (strain Sheeba).